We begin with the raw amino-acid sequence, 249 residues long: Coproheme decarboxylase (249 aa).

Fe-coproporphyrin III contacts are provided by residues Arg-131, 145-149 (YPMDK), His-172, and Gln-185. The active site involves Tyr-145.

This sequence belongs to the ChdC family. Type 1 subfamily. Fe-coproporphyrin III is required as a cofactor.

It catalyses the reaction Fe-coproporphyrin III + 2 H2O2 + 2 H(+) = heme b + 2 CO2 + 4 H2O. The catalysed reaction is Fe-coproporphyrin III + H2O2 + H(+) = harderoheme III + CO2 + 2 H2O. The enzyme catalyses harderoheme III + H2O2 + H(+) = heme b + CO2 + 2 H2O. It functions in the pathway porphyrin-containing compound metabolism; protoheme biosynthesis. Involved in coproporphyrin-dependent heme b biosynthesis. Catalyzes the decarboxylation of Fe-coproporphyrin III (coproheme) to heme b (protoheme IX), the last step of the pathway. The reaction occurs in a stepwise manner with a three-propionate intermediate. The sequence is that of Coproheme decarboxylase from Staphylococcus saprophyticus subsp. saprophyticus (strain ATCC 15305 / DSM 20229 / NCIMB 8711 / NCTC 7292 / S-41).